We begin with the raw amino-acid sequence, 505 residues long: MDELIMMVFVLFTIVLLLTVSMTLAALISTIVVLVVPLIICIIALLIALRIKYGSKKDLSEVSIGFFHPYCTAGGGGERVLWCAIKSIQEEYPYVRCVVYTGDKESDDEIFNKVKKTFDIELGRDNLEFIRLKKRKWVEASTYPRFTLIGQSLGSMILGWEALTKFVPTIFLDSMGYAFTFPIFSLIGGSTVACYVHYPTISSDMISSVKSSSYSFNNDVSISSNKFKTISKLIYYNIFSKIYQIVGSFSKLVMVNGTWTGNHIRDIWKKQFGYDLFIVYPPVDVKGRKQLKLGWMDGTRKNMILSIAQFRPEKNHQLQLRTLAHLLEKYPSHREQPLNTKLVLVGGVRDQADRDRVEQLRNLSKELNIEDHVEFQIGISSDQLNQLLSEASVGIHTMYNEHFGIGVVELMAAGVIPVANNSAGPKEDIVRHEDTGFLASTIQEYAEYIHEILAYREKYVEMQKKARDSTDRFSESNFSNQFLKYIKPLINQSLRNNNSSSKKRN.

At 1 to 3 (MDE) the chain is on the lumenal side. The chain crosses the membrane as a helical span at residues 4–24 (LIMMVFVLFTIVLLLTVSMTL). At 25–145 (AALISTIVVL…KWVEASTYPR (121 aa)) the chain is on the cytoplasmic side. The segment at residues 146-166 (FTLIGQSLGSMILGWEALTKF) is an intramembrane region (helical). At 167-402 (VPTIFLDSMG…VGIHTMYNEH (236 aa)) the chain is on the cytoplasmic side. Positions 403–423 (FGIGVVELMAAGVIPVANNSA) form an intramembrane region, helical. Residues 424-505 (GPKEDIVRHE…NNNSSSKKRN (82 aa)) lie on the Cytoplasmic side of the membrane.

It belongs to the glycosyltransferase group 1 family.

The protein resides in the endoplasmic reticulum membrane. It carries out the reaction an alpha-D-Man-(1-&gt;3)-[alpha-D-Man-(1-&gt;6)]-beta-D-Man-(1-&gt;4)-beta-D-GlcNAc-(1-&gt;4)-alpha-D-GlcNAc-diphospho-di-trans,poly-cis-dolichol + 2 GDP-alpha-D-mannose = an alpha-D-Man-(1-&gt;2)-alpha-D-Man-(1-&gt;2)-alpha-D-Man-(1-&gt;3)-[alpha-D-Man-(1-&gt;6)]-beta-D-Man-(1-&gt;4)-beta-D-GlcNAc-(1-&gt;4)-alpha-D-GlcNAc-diphospho-di-trans,poly-cis-dolichol + 2 GDP + 2 H(+). Its pathway is protein modification; protein glycosylation. GDP-Man:Man(3)GlcNAc(2)-PP-Dol alpha-1,2-mannosyltransferase that operates in the biosynthetic pathway of dolichol-linked oligosaccharides, the glycan precursors employed in protein asparagine (N)-glycosylation. The assembly of dolichol-linked oligosaccharides begins on the cytosolic side of the endoplasmic reticulum membrane and finishes in its lumen. The sequential addition of sugars to dolichol pyrophosphate produces dolichol-linked oligosaccharides containing fourteen sugars, including two GlcNAcs, nine mannoses and three glucoses. Once assembled, the oligosaccharide is transferred from the lipid to nascent proteins by oligosaccharyltransferases. Catalyzes, on the cytoplasmic face of the endoplasmic reticulum, the addition of the fourth and fifth mannose residues to the dolichol-linked oligosaccharide chain, to produce Man(5)GlcNAc(2)-PP-dolichol core oligosaccharide. This chain is GDP-Man:Man(3)GlcNAc(2)-PP-Dol alpha-1,2-mannosyltransferase (alg11), found in Dictyostelium discoideum (Social amoeba).